The following is a 267-amino-acid chain: Neural/ectodermal development factor IMP-L2 (267 aa).

The first 25 residues, 1-25 (MEAKMNLHVCALALLLFGSIATVRG), serve as a signal peptide directing secretion. Ig-like C2-type domains follow at residues 48–149 (PRNR…KTIY) and 174–260 (PRII…TFVY). Cystine bridges form between Cys-80–Cys-139 and Cys-195–Cys-244.

Detected in several sites including the ventral neuroectoderm, the tracheal pits, the pharynx and esophagus, and specific neuronal cell bodies, where it is primarily expressed.

The protein resides in the secreted. Its subcellular location is the extracellular space. Its function is as follows. Essential developmental role during embryogenesis, in particular the normal development of the nervous system. May be involved in some aspect of cell adhesion. The sequence is that of Neural/ectodermal development factor IMP-L2 (ImpL2) from Drosophila melanogaster (Fruit fly).